The primary structure comprises 139 residues: MPIHLEIVTAERVILSDDVDMISVPTKDGRVGILPRHAPLMTILEPGELDIIKNGERTPFAVSGGFMEVLPHRVTILADTVERADEIDEARAEQARAEAEARRREAQSEHDMALAEAKLRKEMVRLRVAQLHKIKRRQS.

Residues 89–110 form a disordered region; it reads EARAEQARAEAEARRREAQSEH.

The protein belongs to the ATPase epsilon chain family. F-type ATPases have 2 components, CF(1) - the catalytic core - and CF(0) - the membrane proton channel. CF(1) has five subunits: alpha(3), beta(3), gamma(1), delta(1), epsilon(1). CF(0) has three main subunits: a, b and c.

It is found in the cell membrane. In terms of biological role, produces ATP from ADP in the presence of a proton gradient across the membrane. This is ATP synthase epsilon chain from Chloroflexus aggregans (strain MD-66 / DSM 9485).